We begin with the raw amino-acid sequence, 384 residues long: Galactokinase (384 aa).

Glutamate 34–aspartate 37 provides a ligand contact to substrate. Serine 123 to serine 129 is a binding site for ATP. Positions 129 and 161 each coordinate Mg(2+). Aspartate 173 acts as the Proton acceptor in catalysis. Position 222 (tyrosine 222) interacts with substrate.

Belongs to the GHMP kinase family. GalK subfamily.

The protein localises to the cytoplasm. It catalyses the reaction alpha-D-galactose + ATP = alpha-D-galactose 1-phosphate + ADP + H(+). It participates in carbohydrate metabolism; galactose metabolism. In terms of biological role, catalyzes the transfer of the gamma-phosphate of ATP to D-galactose to form alpha-D-galactose-1-phosphate (Gal-1-P). The chain is Galactokinase from Haemophilus influenzae (strain PittEE).